The sequence spans 138 residues: Protein SchB (138 aa).

A Cupin type-2 domain is found at 42–108 (VAVVRPGERI…NTGDVEARLV (67 aa)). The disordered stretch occupies residues 118–138 (PDLGHVDTEETDETAPAGVVS).

The protein belongs to the SchB/CurC family.

In Streptomyces halstedii, this protein is Protein SchB (schB).